We begin with the raw amino-acid sequence, 297 residues long: L-ribulose 3-epimerase (297 aa).

The active-site Proton donor/acceptor is the glutamate 147. Glutamate 147 contributes to the Mn(2+) binding site. Residues glutamate 153 and 180–183 (DTFH) contribute to the substrate site. Aspartate 180 and histidine 206 together coordinate Mn(2+). Position 212 (arginine 212) interacts with substrate. Residue glutamate 241 is the Proton donor/acceptor of the active site. A Mn(2+)-binding site is contributed by glutamate 241.

Belongs to the hyi family. In terms of assembly, homotetramer. The cofactor is Mn(2+).

The catalysed reaction is L-ribulose = L-xylulose. It carries out the reaction keto-D-tagatose = keto-D-sorbose. The enzyme catalyses D-allulose = keto-D-fructose. With respect to regulation, strongly inhibited by Co(2+) and Ni(2+), and slightly inhibited by EDTA. Functionally, catalyzes the epimerization of various ketoses at the C(3) position. It is able to interconvert L-ribulose with high efficiency. The enzyme can also accept other ketopentoses such as D-psicose and D-tagatose with lower efficiency. This is L-ribulose 3-epimerase from Mesorhizobium japonicum (strain LMG 29417 / CECT 9101 / MAFF 303099) (Mesorhizobium loti (strain MAFF 303099)).